We begin with the raw amino-acid sequence, 305 residues long: UDP-3-O-acyl-N-acetylglucosamine deacetylase (305 aa).

Zn(2+)-binding residues include H79, H238, and D242. The active-site Proton donor is H265.

Belongs to the LpxC family. It depends on Zn(2+) as a cofactor.

The catalysed reaction is a UDP-3-O-[(3R)-3-hydroxyacyl]-N-acetyl-alpha-D-glucosamine + H2O = a UDP-3-O-[(3R)-3-hydroxyacyl]-alpha-D-glucosamine + acetate. Its pathway is glycolipid biosynthesis; lipid IV(A) biosynthesis; lipid IV(A) from (3R)-3-hydroxytetradecanoyl-[acyl-carrier-protein] and UDP-N-acetyl-alpha-D-glucosamine: step 2/6. Catalyzes the hydrolysis of UDP-3-O-myristoyl-N-acetylglucosamine to form UDP-3-O-myristoylglucosamine and acetate, the committed step in lipid A biosynthesis. This is UDP-3-O-acyl-N-acetylglucosamine deacetylase from Escherichia coli O45:K1 (strain S88 / ExPEC).